Here is a 494-residue protein sequence, read N- to C-terminus: Lysine--tRNA ligase (494 aa).

Mg(2+)-binding residues include Glu399 and Glu406.

It belongs to the class-II aminoacyl-tRNA synthetase family. Mg(2+) is required as a cofactor.

It is found in the cytoplasm. It carries out the reaction tRNA(Lys) + L-lysine + ATP = L-lysyl-tRNA(Lys) + AMP + diphosphate. This chain is Lysine--tRNA ligase (lysS), found in Saccharolobus solfataricus (strain ATCC 35092 / DSM 1617 / JCM 11322 / P2) (Sulfolobus solfataricus).